Consider the following 273-residue polypeptide: Esterase pigG (273 aa).

Residues serine 122, aspartate 215, and histidine 243 each act as charge relay system in the active site.

Belongs to the LovG family.

It participates in secondary metabolite biosynthesis. In terms of biological role, esterase; part of the gene cluster that mediates the biosynthesis of azaphilone pigments (MonAzPs), a complex mixture of compounds with a common azaphilone skeleton very widely used as food colorants. Within the pathway, pigG may assist the nrPKS pigA in the biosynthesis of the hexaketide precursor. The first step of the pathway is performed by the nrPKS pigA that forms the hexaketide precursor from successive condensations of five malonyl-CoA units, with a simple acetyl-CoA starter unit. The role of esterase pigG is not clear, but it may play at most a supplementary role in the formation of the benzaldehyde produced by the pigA nrPKS. This very reactive benzaldehyde is intercepted by the pigC ketoreductase that to provide the first stable enzyme-free MonAzPs intermediate, 6-(4-hydroxy-2-oxopentyl)-3-methyl-2,4-dioxocyclohexane carbaldehyde, also known as M7PKS-1. The FAD-dependent monooxygenase pigN hydroxylates M7PKS-1 at C-4, which triggers the formation of the pyran ring. PigJ, pigK and pigD are involved in the acetylation of the pyran ring. PigJ and pigK form the two subunits of a dedicated fungal FAS that produces the side chain fatty acyl moiety of MonAzPs and pigD transfers the fatty acyl chain to the C-4 alcohol. PigM and pigO are involved in the elimination of the omega-1 alcohol. PigM acts as an O-acetyltransferase that synthesizes the putative O-11 acetyl intermediate whereas pigO eliminates acetic acid to yield an intermediate with a C10(11) double bond. The dehydration of the C-11 alcohol followed by the reduction of the C6(7) double bond by the NAD(P)H-dependent oxidoreductase pigE increases the electrophilicity of the C-5 ketone of the resulting acyl benzopyran. This in turn sets up the C-5 ketone for an intramolecular Knoevenagel aldol condensation with the C-20 enol of the side chain. This condensation affords the characteristic linear tricyclic carbon skeletons of the yellow pigments that serve as the common precursors for the classical yellow pigments monascin and ankaflavin, orange pigments rubopunctatin and monascorubrin, and red pigments ribropunctamine and monascorubramine. The FAD-dependent oxidoreductase pigF is especially invoved in the biosynthesis of orange and red pigments via desaturation of C6(7). The polypeptide is Esterase pigG (Monascus ruber (Mold)).